We begin with the raw amino-acid sequence, 323 residues long: Calcium homeostasis modulator protein 2 (323 aa).

Residues 1-21 (MAALIAENFRFLSLFFKSKDV) lie on the Cytoplasmic side of the membrane. Residues 14-39 (LFFKSKDVMIFNGLVALGTVGSQELF) form a central pore region. Residues 22 to 43 (MIFNGLVALGTVGSQELFSVVA) form a helical membrane-spanning segment. Over 44 to 52 (FHCPCSPAR) the chain is Extracellular. Disulfide bonds link cysteine 46–cysteine 130 and cysteine 48–cysteine 162. The helical transmembrane segment at 53–76 (NYLYGLTAIGVPALALFLIGVILN) threads the bilayer. Residues 77–101 (NHTWNLVAECQYRRAKNCSAAPTFL) are Cytoplasmic-facing. The chain crosses the membrane as a helical span at residues 102–132 (LLSSILGRAAVAPVTWSVISLLRGEAYVCAL). At 133–179 (SEFVDPSSLTAGDEGFPPDHATEILARFPCGEGPANLSGFREEVSRR) the chain is on the extracellular side. Residues 145-152 (DEGFPPDH) are hemichannel docking. The chain crosses the membrane as a helical span at residues 180 to 206 (LKYESQLFGWLLIGVVAILVFLTKCFK). At 207–323 (HYCSPLSYRQ…DNVEMALLTV (117 aa)) the chain is on the cytoplasmic side. The interval 214 to 251 (YRQEAYWAQYRTNEDQLFQRTAEVHSRVLAANNVRRFF) is intersubunit interaction.

This sequence belongs to the CALHM family. In terms of assembly, homo-undecamer. Two undecameric hemichannels can assemble in a head-to-head manner to form a gap junction.

It is found in the cell membrane. The catalysed reaction is ATP(in) = ATP(out). Functionally, pore-forming subunit of Ca(2+) homeostasis modulator channels. Mediates ATP release from astrocytes and ATP-induced Ca(2+) influx in microglia thus regulating neuronal ATP and Ca(2+) homeostasis, synaptic transmission and neuroinflammatory response. May form intercellular gap junctions. The gating mechanism remains unknown. The sequence is that of Calcium homeostasis modulator protein 2 (Calhm2) from Rattus norvegicus (Rat).